We begin with the raw amino-acid sequence, 151 residues long: Globin CTT-IIIA (151 aa).

The 140-residue stretch at 8–147 (SMTDAQVAAV…MFHVIFNALD (140 aa)) folds into the Globin domain. H98 is a heme b binding site.

The protein belongs to the globin family. Monomer.

The chain is Globin CTT-IIIA from Chironomus thummi thummi (Midge).